The following is a 562-amino-acid chain: Cytosolic Fe-S cluster assembly factor nar1 (562 aa).

A [4Fe-4S] cluster-binding site is contributed by Cys-20. The segment at 28-47 is disordered; that stretch reads PKNESSNSQNPYEVTTEDKV. Residues 29–40 are compositionally biased toward polar residues; that stretch reads KNESSNSQNPYE. [4Fe-4S] cluster contacts are provided by Cys-62, Cys-65, Cys-68, Cys-214, and Cys-269. Residues 439–462 form a disordered region; sequence ARVPAASAGGNRRQPISRNSASAG. A compositionally biased stretch (polar residues) spans 452–462; it reads QPISRNSASAG. Cys-475 and Cys-479 together coordinate [4Fe-4S] cluster. 2 disordered regions span residues 492–513 and 541–562; these read REAS…PTPH and HSPS…IGLT. Positions 494–505 are enriched in polar residues; it reads ASTSTQSVTAVE.

The protein belongs to the NARF family.

Its function is as follows. Component of the cytosolic Fe/S protein assembly machinery. Required for maturation of extramitochondrial Fe/S proteins. May play a role in the transfer of pre-assembled Fe/S clusters to target apoproteins. In Aspergillus flavus (strain ATCC 200026 / FGSC A1120 / IAM 13836 / NRRL 3357 / JCM 12722 / SRRC 167), this protein is Cytosolic Fe-S cluster assembly factor nar1 (nar1).